A 574-amino-acid chain; its full sequence is Proline--tRNA ligase (574 aa).

Belongs to the class-II aminoacyl-tRNA synthetase family. ProS type 1 subfamily. In terms of assembly, homodimer.

Its subcellular location is the cytoplasm. It carries out the reaction tRNA(Pro) + L-proline + ATP = L-prolyl-tRNA(Pro) + AMP + diphosphate. Functionally, catalyzes the attachment of proline to tRNA(Pro) in a two-step reaction: proline is first activated by ATP to form Pro-AMP and then transferred to the acceptor end of tRNA(Pro). As ProRS can inadvertently accommodate and process non-cognate amino acids such as alanine and cysteine, to avoid such errors it has two additional distinct editing activities against alanine. One activity is designated as 'pretransfer' editing and involves the tRNA(Pro)-independent hydrolysis of activated Ala-AMP. The other activity is designated 'posttransfer' editing and involves deacylation of mischarged Ala-tRNA(Pro). The misacylated Cys-tRNA(Pro) is not edited by ProRS. This Nitratidesulfovibrio vulgaris (strain ATCC 29579 / DSM 644 / CCUG 34227 / NCIMB 8303 / VKM B-1760 / Hildenborough) (Desulfovibrio vulgaris) protein is Proline--tRNA ligase.